Reading from the N-terminus, the 345-residue chain is NADPH dehydrogenase (345 aa).

23 to 26 (SPMC) contributes to the FMN binding site. A substrate-binding site is contributed by Y28. Residues A60 and Q102 each contribute to the FMN site. 164–167 (HGAH) lines the substrate pocket. Residues R215 and 307–308 (GR) each bind FMN.

The protein belongs to the NADH:flavin oxidoreductase/NADH oxidase family. NamA subfamily. In terms of assembly, homotetramer. Requires FMN as cofactor.

The enzyme catalyses A + NADPH + H(+) = AH2 + NADP(+). Catalyzes the reduction of the double bond of an array of alpha,beta-unsaturated aldehydes and ketones. It also reduces the nitro group of nitroester and nitroaromatic compounds. It could have a role in detoxification processes. This Bacillus cereus (strain Q1) protein is NADPH dehydrogenase.